We begin with the raw amino-acid sequence, 80 residues long: Defensin-like protein 44 (80 aa).

An N-terminal signal peptide occupies residues M1 to A27. Disulfide bonds link C40/C79, C44/C67, C53/C77, and C57/C78.

Belongs to the DEFL family.

It localises to the secreted. This Arabidopsis thaliana (Mouse-ear cress) protein is Defensin-like protein 44.